A 647-amino-acid chain; its full sequence is tRNA 5-methylaminomethyl-2-thiouridine biosynthesis bifunctional protein MnmC (647 aa).

The segment at 1 to 235 (MSIPPFSQAS…KRDMLCGRFT (235 aa)) is tRNA (mnm(5)s(2)U34)-methyltransferase. The tract at residues 250–647 (IGGGIAGTAS…RGLACHPLRR (398 aa)) is FAD-dependent cmnm(5)s(2)U34 oxidoreductase.

This sequence in the N-terminal section; belongs to the methyltransferase superfamily. tRNA (mnm(5)s(2)U34)-methyltransferase family. It in the C-terminal section; belongs to the DAO family. It depends on FAD as a cofactor.

It is found in the cytoplasm. It carries out the reaction 5-aminomethyl-2-thiouridine(34) in tRNA + S-adenosyl-L-methionine = 5-methylaminomethyl-2-thiouridine(34) in tRNA + S-adenosyl-L-homocysteine + H(+). Catalyzes the last two steps in the biosynthesis of 5-methylaminomethyl-2-thiouridine (mnm(5)s(2)U) at the wobble position (U34) in tRNA. Catalyzes the FAD-dependent demodification of cmnm(5)s(2)U34 to nm(5)s(2)U34, followed by the transfer of a methyl group from S-adenosyl-L-methionine to nm(5)s(2)U34, to form mnm(5)s(2)U34. This is tRNA 5-methylaminomethyl-2-thiouridine biosynthesis bifunctional protein MnmC from Methylobacillus flagellatus (strain ATCC 51484 / DSM 6875 / VKM B-1610 / KT).